Here is a 419-residue protein sequence, read N- to C-terminus: Gamma-glutamyl phosphate reductase (419 aa).

It belongs to the gamma-glutamyl phosphate reductase family.

It is found in the cytoplasm. It carries out the reaction L-glutamate 5-semialdehyde + phosphate + NADP(+) = L-glutamyl 5-phosphate + NADPH + H(+). It functions in the pathway amino-acid biosynthesis; L-proline biosynthesis; L-glutamate 5-semialdehyde from L-glutamate: step 2/2. Functionally, catalyzes the NADPH-dependent reduction of L-glutamate 5-phosphate into L-glutamate 5-semialdehyde and phosphate. The product spontaneously undergoes cyclization to form 1-pyrroline-5-carboxylate. The chain is Gamma-glutamyl phosphate reductase from Yersinia enterocolitica serotype O:8 / biotype 1B (strain NCTC 13174 / 8081).